A 478-amino-acid chain; its full sequence is Glutamyl-tRNA reductase (478 aa).

Substrate-binding positions include 49-52 (TCNR), S109, 114-116 (EQQ), and Q120. Residue C50 is the Nucleophile of the active site. 191 to 196 (GAGSMG) is a binding site for NADP(+).

This sequence belongs to the glutamyl-tRNA reductase family. Homodimer.

The catalysed reaction is (S)-4-amino-5-oxopentanoate + tRNA(Glu) + NADP(+) = L-glutamyl-tRNA(Glu) + NADPH + H(+). The protein operates within porphyrin-containing compound metabolism; protoporphyrin-IX biosynthesis; 5-aminolevulinate from L-glutamyl-tRNA(Glu): step 1/2. In terms of biological role, catalyzes the NADPH-dependent reduction of glutamyl-tRNA(Glu) to glutamate 1-semialdehyde (GSA). The chain is Glutamyl-tRNA reductase from Rhodococcus opacus (strain B4).